A 406-amino-acid chain; its full sequence is Peptidase T (406 aa).

H77 contributes to the Zn(2+) binding site. D79 is an active-site residue. Residue D139 coordinates Zn(2+). E173 serves as the catalytic Proton acceptor. Zn(2+)-binding residues include E174, D196, and H377.

This sequence belongs to the peptidase M20B family. Requires Zn(2+) as cofactor.

The protein resides in the cytoplasm. The catalysed reaction is Release of the N-terminal residue from a tripeptide.. Cleaves the N-terminal amino acid of tripeptides. This chain is Peptidase T, found in Parabacteroides distasonis (strain ATCC 8503 / DSM 20701 / CIP 104284 / JCM 5825 / NCTC 11152).